Here is a 325-residue protein sequence, read N- to C-terminus: Ribosomal RNA small subunit methyltransferase H (325 aa).

Residues 42–44, Asp62, Phe86, Asp105, and Gln112 contribute to the S-adenosyl-L-methionine site; that span reads GGH.

It belongs to the methyltransferase superfamily. RsmH family.

It localises to the cytoplasm. It catalyses the reaction cytidine(1402) in 16S rRNA + S-adenosyl-L-methionine = N(4)-methylcytidine(1402) in 16S rRNA + S-adenosyl-L-homocysteine + H(+). Functionally, specifically methylates the N4 position of cytidine in position 1402 (C1402) of 16S rRNA. This is Ribosomal RNA small subunit methyltransferase H from Cupriavidus metallidurans (strain ATCC 43123 / DSM 2839 / NBRC 102507 / CH34) (Ralstonia metallidurans).